The sequence spans 1746 residues: MSACNTFTEHVWKPGECKNCFKPKSLHQLPPDPEKAPITHGNVKTNANHSNNHRIRNTGNFRPPVAKKPTIAVKPTMIVADGQSICGELSIQEHCENKPVIIGWNRNRAALSQKPLNNNNEDDEGISHVPKPYGNNDSAKKMSDNNNGLTEVLKEIAGLDTAPQIRGNETNSRETFLGRINDCYKRSLERKLPPSCMIGGIKETQGKHVILSGSTEVISNEGGRFCYPEFSSGEESEEDVLFSNMEEEHESWDESDEELLAMEIRMRGQPRFANFRANTLSPVRFFVDKKWNTIPLRNKSLQRICAVDYDDSYDEILNGYEENSVVSYGQGSIQSMVSSDSTSPDSSLTEESRSETASSLSQKICNGGLSPGNPGDSKDMKEIEPNYESPSSNNQDKDSSQASKSSIKVPETHKAVLALRLEEKDGKIAVQTEKEESKASTDVAGQAVTINLVPTEEQAKPYRVVNLEQPLCKPYTVVDVSAAMASEHLEGPVNSPKTKSSSSTPNSPVTSSSLTPGQISAHFQKSSAIRYQEVWTSSTSPRQKIPKVELITSGTGPNVPPRKNCHKSAPTSPTATNISSKTIPVKSPNLSEIKFNSYNNAGMPPFPIIIHDEPTYARSSKNAIKVPIVINPNAYDNLAIYKSFLGTSGELSVKEKTTSVISHTYEEIETESKVPDNTTSKTTDCLQTKGFSNSTEHKRGSVAQKVQEFNNCLNRGQSSPQRSYSSSHSSPAKIQRATQEPVAKIEGTQESQMVGSSSTREKASTVLSQIVASIQPPQSPPETPQSGPKACSVEELYAIPPDADVAKSTPKSTPVRPKSLFTSQPSGEAEAPQTTDSPTTKVQKDPSIKPVTPSPSKLVTSPQSEPPAPFPPPRSTSSPYHAGNLLQRHFTNWTKPTSPTRSTEAESVLHSEGSRRAADAKPKRWISFKSFFRRRKTDEEDDKEKEREKGKLVGLDGTVIHMLPPPPVQRHHWFTEAKGESSEKPAIVFMYRCDPAQGQLSVDQSKARTDQAAVMEKGRAENALLQDSEKKRSHSSPSQIPKKILSHMTHEVTEDFSPRDPRTVVGKQDGRGCTSVTTALSLPELEREDGKEDISDPMDPNPCSATYSNLGQSRAAMIPPKQPRQPKGAVDDAIAFGGKTDQEAPNASQPTPPPLPKKMIIRANTEPISKDLQKSMESSLCVMANPTYDIDPNWDASSAGSSISYELKGLDIESYDSLERPLRKERPVPSAANSISSLTTLSIKDRFSNSMESLSSRRGPSCRQGRGIQKPQRQALYRGLENREEVVGKIRSLHTDALKKLAVKCEDLFMAGQKDQLRFGVDSWSDFRLTSDKPCCEAGDAVYYTASYAKDPLNNYAVKICKSKAKESQQYYHSLAVRQSLAVHFNIQQDCGHFLAEVPNRLLPWEDPDDPEKDEDDMEETEEDAKGETDGKNPKPCSEAASSQKENQGVMSKKQRSHVVVITREVPCLTVADFVRDSLAQHGKSPDLYERQVCLLLLQLCSGLEHLKPYHVTHCDLRLENLLLVHYQPGGTAQGFGPAEPSPTSSYPTRLIVSNFSQAKQKSHLVDPEILRDQSRLAPEIITATQYKKCDEFQTGILIYEMLHLPNPFDENPELKEREYTRADLPRIPFRSPYSRGLQQLASCLLNPNPSERILISDAKGILQCLLWGPREDLFQTFTACPSLVQRNTLLQNWLDIKRTLLMIKFAEKSLDREGGISLEDWLCAQYLAFATTDSLSCIVKILQHR.

Residues K44–A66 are disordered. S281 is subject to Phosphoserine. Disordered regions lie at residues Q334–E411 and L489–G517. Over residues S338–T349 the composition is skewed to low complexity. Residues E355 to I364 show a composition bias toward polar residues. The segment covering P492 to S513 has biased composition (low complexity). Residues S540, S572, and S587 each carry the phosphoserine modification. The segment at I551–N577 is disordered. Y635 and Y641 each carry phosphotyrosine. S648 carries the phosphoserine modification. Phosphotyrosine is present on Y665. Disordered stretches follow at residues E671–G700, L713–S764, D802–A920, V1052–P1102, and G1138–K1158. Residues P675–S694 are compositionally biased toward polar residues. A compositionally biased stretch (low complexity) spans S718–S730. Polar residues-rich tracts occupy residues T748–S758 and L820–K841. Phosphoserine is present on residues S826 and S854. The segment covering S864–R874 has biased composition (pro residues). Over residues H889–S902 the composition is skewed to polar residues. Position 898 is a phosphoserine (S898). 3 stretches are compositionally biased toward basic and acidic residues: residues T903–A920, V1052–R1062, and E1084–I1094. T1151 carries the post-translational modification Phosphothreonine. Y1188 bears the Phosphotyrosine mark. Residues E1285 to A1311 form a required for homodimerization region. The Protein kinase domain occupies Q1313–F1675. Phosphoserine is present on S1374. The interval L1402–R1456 is disordered. Positions E1406–E1423 are enriched in acidic residues. Positions D1424–N1433 are enriched in basic and acidic residues. The span at A1440–V1450 shows a compositional bias: polar residues. A required for homodimerization region spans residues P1670 to L1743.

This sequence belongs to the protein kinase superfamily. As to quaternary structure, homodimer. Interacts with BCAR1 and CRK. Interacts with PRAG1. Interacts (when phosphorylated at Tyr-1188) with SHC1 (via PID domain). Found in a complex with PPP1CA, PPP1CC, SHC1 and PEAK1. Interacts (when phosphorylated at Tyr-635) with tensin TNS3 (when phosphorylated on the SH2 domain); TNS3 also interacts with integrins ITGB1, ITGB3 and ITGB5 and mediates their association with PEAK1. Interacts with RASAL2 and GRB2. Post-translationally, phosphorylated on tyrosine in a CSK-dependent manner in response to adhesion to fibronectin and to EGF stimulation. Phosphorylation at Tyr-665 by a Src family kinase controls subcellular localization to focal adhesion and focal adhesion dynamics. Phosphorylation at Tyr-1188 is essential for binding to SHC1. Phosphorylation at Tyr-635 promotes interaction with tensin TNS3.

It is found in the cytoplasm. Its subcellular location is the cytoskeleton. It localises to the cell junction. The protein resides in the focal adhesion. Probable catalytically inactive kinase. Scaffolding protein that regulates the cytoskeleton to control cell spreading and migration by modulating focal adhesion dynamics. Acts as a scaffold for mediating EGFR signaling. The chain is Inactive tyrosine-protein kinase PEAK1 (PEAK1) from Homo sapiens (Human).